Reading from the N-terminus, the 270-residue chain is Putative pyruvate, phosphate dikinase regulatory protein 2 (270 aa).

Position 151 to 158 (151 to 158) interacts with ADP; it reads GVSRTSKT.

Belongs to the pyruvate, phosphate/water dikinase regulatory protein family. PDRP subfamily.

The enzyme catalyses N(tele)-phospho-L-histidyl/L-threonyl-[pyruvate, phosphate dikinase] + ADP = N(tele)-phospho-L-histidyl/O-phospho-L-threonyl-[pyruvate, phosphate dikinase] + AMP + H(+). The catalysed reaction is N(tele)-phospho-L-histidyl/O-phospho-L-threonyl-[pyruvate, phosphate dikinase] + phosphate + H(+) = N(tele)-phospho-L-histidyl/L-threonyl-[pyruvate, phosphate dikinase] + diphosphate. Bifunctional serine/threonine kinase and phosphorylase involved in the regulation of the pyruvate, phosphate dikinase (PPDK) by catalyzing its phosphorylation/dephosphorylation. The chain is Putative pyruvate, phosphate dikinase regulatory protein 2 from Listeria monocytogenes serovar 1/2a (strain ATCC BAA-679 / EGD-e).